Consider the following 249-residue polypeptide: 3-deoxy-D-manno-octulosonic acid kinase (249 aa).

The active site involves Asp175.

This sequence belongs to the protein kinase superfamily. KdkA/RfaP family.

It is found in the cell inner membrane. It catalyses the reaction an alpha-Kdo-(2-&gt;6)-lipid IVA + ATP = a 4-O-phospho-alpha-Kdo-(2-&gt;6)-lipid IVA + ADP + H(+). It functions in the pathway bacterial outer membrane biogenesis; LPS core biosynthesis. In terms of biological role, catalyzes the ATP-dependent phosphorylation of the 3-deoxy-D-manno-octulosonic acid (Kdo) residue in Kdo-lipid IV(A) at the 4-OH position. The sequence is that of 3-deoxy-D-manno-octulosonic acid kinase from Xanthomonas campestris pv. campestris (strain 8004).